The primary structure comprises 296 residues: Transposase for insertion sequence element IST2 (296 aa).

This sequence belongs to the transposase mutator family.

Required for the transposition of the insertion element. This chain is Transposase for insertion sequence element IST2, found in Acidithiobacillus ferrooxidans (Thiobacillus ferrooxidans).